Consider the following 108-residue polypeptide: Nucleoid-associated protein BTH_I2220 (108 aa).

The protein belongs to the YbaB/EbfC family. As to quaternary structure, homodimer.

Its subcellular location is the cytoplasm. The protein localises to the nucleoid. Functionally, binds to DNA and alters its conformation. May be involved in regulation of gene expression, nucleoid organization and DNA protection. The polypeptide is Nucleoid-associated protein BTH_I2220 (Burkholderia thailandensis (strain ATCC 700388 / DSM 13276 / CCUG 48851 / CIP 106301 / E264)).